Reading from the N-terminus, the 435-residue chain is Glutamyl-tRNA reductase (435 aa).

Residues 49-52 (TCNR), Ser-109, 114-116 (EGQ), and Gln-120 each bind substrate. Cys-50 functions as the Nucleophile in the catalytic mechanism. 198 to 203 (GAGRMS) contacts NADP(+).

The protein belongs to the glutamyl-tRNA reductase family. Homodimer.

It catalyses the reaction (S)-4-amino-5-oxopentanoate + tRNA(Glu) + NADP(+) = L-glutamyl-tRNA(Glu) + NADPH + H(+). It functions in the pathway porphyrin-containing compound metabolism; protoporphyrin-IX biosynthesis; 5-aminolevulinate from L-glutamyl-tRNA(Glu): step 1/2. The protein operates within porphyrin-containing compound metabolism; chlorophyll biosynthesis. In terms of biological role, catalyzes the NADPH-dependent reduction of glutamyl-tRNA(Glu) to glutamate 1-semialdehyde (GSA). The polypeptide is Glutamyl-tRNA reductase (Prochlorococcus marinus (strain MIT 9515)).